The sequence spans 544 residues: Chaperonin GroEL 1 (544 aa).

Residues 29-32 (TLGP), 86-90 (DGTTT), Gly-413, and Asp-495 each bind ATP. The tract at residues 525–544 (PEPKTNTPASSGSGMSDYDY) is disordered. Over residues 528 to 538 (KTNTPASSGSG) the composition is skewed to polar residues.

This sequence belongs to the chaperonin (HSP60) family. As to quaternary structure, forms a cylinder of 14 subunits composed of two heptameric rings stacked back-to-back. Interacts with the co-chaperonin GroES.

The protein resides in the cytoplasm. The enzyme catalyses ATP + H2O + a folded polypeptide = ADP + phosphate + an unfolded polypeptide.. Together with its co-chaperonin GroES, plays an essential role in assisting protein folding. The GroEL-GroES system forms a nano-cage that allows encapsulation of the non-native substrate proteins and provides a physical environment optimized to promote and accelerate protein folding. The chain is Chaperonin GroEL 1 from Synechococcus sp. (strain JA-2-3B'a(2-13)) (Cyanobacteria bacterium Yellowstone B-Prime).